The sequence spans 409 residues: Phospho-N-acetylmuramoyl-pentapeptide-transferase (409 aa).

Transmembrane regions (helical) follow at residues 23-43, 73-93, 95-115, 132-152, 214-234, 247-267, 279-299, 305-325, 331-351, and 386-406; these read YITF…TIFG, TPTM…LLLA, LNNI…AIGF, GIFK…TLYF, YAWL…SNGA, TSAI…NVIF, SGEM…FLWY, AVFM…VLAI, MLIP…VLQV, and KIVT…IVTL.

Belongs to the glycosyltransferase 4 family. MraY subfamily. Mg(2+) serves as cofactor.

Its subcellular location is the cell inner membrane. It catalyses the reaction UDP-N-acetyl-alpha-D-muramoyl-L-alanyl-gamma-D-glutamyl-meso-2,6-diaminopimeloyl-D-alanyl-D-alanine + di-trans,octa-cis-undecaprenyl phosphate = di-trans,octa-cis-undecaprenyl diphospho-N-acetyl-alpha-D-muramoyl-L-alanyl-D-glutamyl-meso-2,6-diaminopimeloyl-D-alanyl-D-alanine + UMP. It participates in cell wall biogenesis; peptidoglycan biosynthesis. Catalyzes the initial step of the lipid cycle reactions in the biosynthesis of the cell wall peptidoglycan: transfers peptidoglycan precursor phospho-MurNAc-pentapeptide from UDP-MurNAc-pentapeptide onto the lipid carrier undecaprenyl phosphate, yielding undecaprenyl-pyrophosphoryl-MurNAc-pentapeptide, known as lipid I. This Flavobacterium psychrophilum (strain ATCC 49511 / DSM 21280 / CIP 103535 / JIP02/86) protein is Phospho-N-acetylmuramoyl-pentapeptide-transferase.